Consider the following 453-residue polypeptide: Tubulin alpha-1/2/3 chain (453 aa).

Glutamine 11 lines the GTP pocket. An N6-acetyllysine modification is found at lysine 40. Residues glutamate 71, serine 140, glycine 144, threonine 145, threonine 179, asparagine 206, and asparagine 228 each coordinate GTP. Residue glutamate 71 coordinates Mg(2+). Glutamate 254 is an active-site residue. The disordered stretch occupies residues 429 to 453 (EKDYEEVGTESQEGDGEEGEDGGDQ). Acidic residues predominate over residues 431 to 453 (DYEEVGTESQEGDGEEGEDGGDQ).

Belongs to the tubulin family. In terms of assembly, dimer of alpha and beta chains. A typical microtubule is a hollow water-filled tube with an outer diameter of 25 nm and an inner diameter of 15 nM. Alpha-beta heterodimers associate head-to-tail to form protofilaments running lengthwise along the microtubule wall with the beta-tubulin subunit facing the microtubule plus end conferring a structural polarity. Microtubules usually have 13 protofilaments but different protofilament numbers can be found in some organisms and specialized cells. Mg(2+) is required as a cofactor. Post-translationally, acetylation of alpha chains at Lys-40 stabilizes microtubules and affects affinity and processivity of microtubule motors. This modification has a role in multiple cellular functions, ranging from cell motility, cell cycle progression or cell differentiation to intracellular trafficking and signaling.

The protein localises to the cytoplasm. The protein resides in the cytoskeleton. It carries out the reaction GTP + H2O = GDP + phosphate + H(+). Tubulin is the major constituent of microtubules, a cylinder consisting of laterally associated linear protofilaments composed of alpha- and beta-tubulin heterodimers. Microtubules grow by the addition of GTP-tubulin dimers to the microtubule end, where a stabilizing cap forms. Below the cap, tubulin dimers are in GDP-bound state, owing to GTPase activity of alpha-tubulin. This is Tubulin alpha-1/2/3 chain (TBA1) from Naegleria gruberi (Amoeba).